The chain runs to 761 residues: Xaa-Pro dipeptidyl-peptidase (761 aa).

Active-site charge relay system residues include serine 349, aspartate 469, and histidine 499.

Belongs to the peptidase S15 family. In terms of assembly, homodimer.

It localises to the cytoplasm. The catalysed reaction is Hydrolyzes Xaa-Pro-|- bonds to release unblocked, N-terminal dipeptides from substrates including Ala-Pro-|-p-nitroanilide and (sequentially) Tyr-Pro-|-Phe-Pro-|-Gly-Pro-|-Ile.. Functionally, removes N-terminal dipeptides sequentially from polypeptides having unsubstituted N-termini provided that the penultimate residue is proline. This is Xaa-Pro dipeptidyl-peptidase from Streptococcus equi subsp. equi (strain 4047).